We begin with the raw amino-acid sequence, 460 residues long: Lipase member H-A (460 aa).

Residues 1-26 (MLLSFYFNGLLLVGCLLSWGRSDTEG) form the signal peptide. 2 N-linked (GlcNAc...) asparagine glycosylation sites follow: N67 and N75. Catalysis depends on S163, which acts as the Nucleophile. N177 carries N-linked (GlcNAc...) asparagine glycosylation. The active-site Charge relay system is the D187. The cysteines at positions 242 and 255 are disulfide-linked. H257 serves as the catalytic Charge relay system. Cystine bridges form between C279-C290 and C293-C301. An N-linked (GlcNAc...) asparagine glycan is attached at N289. An N-linked (GlcNAc...) asparagine glycan is attached at N366. Cysteines 436 and 455 form a disulfide.

The protein belongs to the AB hydrolase superfamily. Lipase family.

Its subcellular location is the secreted. The protein localises to the cell membrane. It carries out the reaction 1-hexadecanoyl-2-(9Z-octadecenoyl)-sn-glycero-3-phosphate + H2O = 2-(9Z-octadecenoyl)-sn-glycero-3-phosphate + hexadecanoate + H(+). Hydrolyzes specifically phosphatidic acid (PA) to produce 2-acyl lysophosphatidic acid (LPA; a potent bioactive lipid mediator) and fatty acid. Does not hydrolyze other phospholipids, like phosphatidylserine (PS), phosphatidylcholine (PC) and phosphatidylethanolamine (PE) or triacylglycerol (TG). The sequence is that of Lipase member H-A (liph-a) from Xenopus laevis (African clawed frog).